A 139-amino-acid chain; its full sequence is D-ribose pyranase (139 aa).

Catalysis depends on H20, which acts as the Proton donor. Substrate is bound by residues D28, H106, and 128 to 130 (YAN).

The protein belongs to the RbsD / FucU family. RbsD subfamily. As to quaternary structure, homodecamer.

Its subcellular location is the cytoplasm. The enzyme catalyses beta-D-ribopyranose = beta-D-ribofuranose. It functions in the pathway carbohydrate metabolism; D-ribose degradation; D-ribose 5-phosphate from beta-D-ribopyranose: step 1/2. Catalyzes the interconversion of beta-pyran and beta-furan forms of D-ribose. The chain is D-ribose pyranase from Photobacterium profundum (strain SS9).